The primary structure comprises 709 residues: Dual specificity calcium/calmodulin-dependent 3',5'-cyclic nucleotide phosphodiesterase 1C (709 aa).

The residue at position 1 (methionine 1) is an N-acetylmethionine. The calmodulin-binding stretch occupies residues 123–146 (EKPRFKSIVHAVQAGIFVERMYRR). The PDEase domain maps to 151-528 (VGLSYPPAVI…ERWRAKVPKE (378 aa)). The active-site Proton donor is histidine 228. Histidine 232, histidine 268, aspartate 269, and aspartate 376 together coordinate Zn(2+). Mg(2+) is bound at residue aspartate 269. 2 disordered regions span residues 453–495 (LIDE…APIN) and 523–650 (AKVP…TCRL). Residues 483–495 (VKTSGSEGSAPIN) show a composition bias toward polar residues. Positions 523–556 (AKVPKEEKAKKEAEEKARLAAEEQQKEMEAKSQA) are enriched in basic and acidic residues. Over residues 571–581 (ETKNQVNGTRA) the composition is skewed to polar residues. 2 stretches are compositionally biased toward basic and acidic residues: residues 582–598 (NKSDNPRGKNSKAEKSS) and 606–633 (DFKDGKNKTDKKDHSNIGNDSKKTDGTK).

The protein belongs to the cyclic nucleotide phosphodiesterase family. PDE1 subfamily. Homodimer. Requires Zn(2+) as cofactor. Mg(2+) serves as cofactor. In terms of tissue distribution, isoform PDE1C2 is present in the heart and brain and, at lower levels in the lung, liver, kidney and skeletal muscle. Isoform PDE1C1 is expressed in the heart and brain and, at lower levels in lung. Also expressed at low levels in uterus and testis.

It is found in the lysosome. The enzyme catalyses a nucleoside 3',5'-cyclic phosphate + H2O = a nucleoside 5'-phosphate + H(+). The catalysed reaction is 3',5'-cyclic GMP + H2O = GMP + H(+). It catalyses the reaction 3',5'-cyclic AMP + H2O = AMP + H(+). Type I PDE are activated by the binding of calmodulin in the presence of Ca(2+). In terms of biological role, calmodulin-dependent cyclic nucleotide phosphodiesterase with a dual specificity for the second messengers cAMP and cGMP, which are key regulators of many important physiological processes. Has a high affinity for both cAMP and cGMP. Modulates the amplitude and duration of the cAMP signal in sensory cilia in response to odorant stimulation, hence contributing to the generation of action potentials. Regulates smooth muscle cell proliferation. Regulates the stability of growth factor receptors, including PDGFRB. The chain is Dual specificity calcium/calmodulin-dependent 3',5'-cyclic nucleotide phosphodiesterase 1C from Homo sapiens (Human).